We begin with the raw amino-acid sequence, 411 residues long: LIM domain-binding protein 1 (411 aa).

Serine 2 carries the post-translational modification N-acetylserine. Threonine 61 carries the post-translational modification Phosphothreonine. Phosphoserine is present on residues serine 265 and serine 302. Disordered stretches follow at residues 283–330 (APPA…TFAL) and 367–411 (DAAN…QASQ). The segment covering 302–318 (SGGSTMSSGGGNTNNSN) has biased composition (low complexity). An LIM interaction domain (LID) domain is found at 336–375 (DVMVVGEPTLMGGEFGDEDERLITRLENTQFDAANGIDDE).

The protein belongs to the LDB family. Interacts with ESR1. Forms homodimers and heterodimers. Interacts with and activates LHX1/LIM1. Interacts with the LIM domains of ISL1 and LMO2. Can assemble in a complex with LMO2 and TAL1/SCL but does not interact with TAL1/SCL directly. Strongly interacts with the LIM2 domain of LMX1A and more weakly with the LIM1 domain. Homodimerization is not required for, and does not effect, LMX1A-binding. Component of a nuclear TAL-1 complex composed at least of CBFA2T3, LDB1, TAL1 and TCF3. Interacts with LHX6 and LHX9. At neuronal promoters, forms a complex with LHX3 involved in the specification of interneurons, in motor neurons, it is displaced by ISL1 to form a ternary complex in which ISL1 contacts both LHX3 and LDB1. Interacts with SLK; leading to negatively regulate SLK kinase activity. Interacts with YWHAZ. Interacts with PRDM1/BLIMP1. Interacts with LMO4. Interacts with RLIM/RNF12; the interaction inhibits the ubiquitination of LMO proteins. Post-translationally, ubiquitinated by RLIM/RNF12, leading to its degradation by the proteasome. As to expression, expressed in a wide range of adult tissues including brain, heart, skeletal muscle, colon, thymus, spleen, kidney, liver, small intestine, lung and peripheral blood leukocytes.

Its subcellular location is the nucleus. In terms of biological role, binds to the LIM domain of a wide variety of LIM domain-containing transcription factors. May regulate the transcriptional activity of LIM-containing proteins by determining specific partner interactions. Plays a role in the development of interneurons and motor neurons in cooperation with LHX3 and ISL1. Acts synergistically with LHX1/LIM1 in axis formation and activation of gene expression. Acts with LMO2 in the regulation of red blood cell development, maintaining erythroid precursors in an immature state. The polypeptide is LIM domain-binding protein 1 (LDB1) (Homo sapiens (Human)).